A 247-amino-acid chain; its full sequence is NAD(P)H-quinone oxidoreductase subunit K, chloroplastic (247 aa).

4 residues coordinate [4Fe-4S] cluster: C64, C65, C129, and C160.

It belongs to the complex I 20 kDa subunit family. NDH is composed of at least 16 different subunits, 5 of which are encoded in the nucleus. [4Fe-4S] cluster is required as a cofactor.

It is found in the plastid. It localises to the chloroplast thylakoid membrane. It catalyses the reaction a plastoquinone + NADH + (n+1) H(+)(in) = a plastoquinol + NAD(+) + n H(+)(out). The enzyme catalyses a plastoquinone + NADPH + (n+1) H(+)(in) = a plastoquinol + NADP(+) + n H(+)(out). Its function is as follows. NDH shuttles electrons from NAD(P)H:plastoquinone, via FMN and iron-sulfur (Fe-S) centers, to quinones in the photosynthetic chain and possibly in a chloroplast respiratory chain. The immediate electron acceptor for the enzyme in this species is believed to be plastoquinone. Couples the redox reaction to proton translocation, and thus conserves the redox energy in a proton gradient. The chain is NAD(P)H-quinone oxidoreductase subunit K, chloroplastic from Mesostigma viride (Green alga).